Consider the following 501-residue polypeptide: Ribose import ATP-binding protein RbsA (501 aa).

ABC transporter domains follow at residues 8–245 (LKMV…VGRT) and 255–500 (VKKG…VGIN). 40–47 (GENGAGKS) provides a ligand contact to ATP.

It belongs to the ABC transporter superfamily. Ribose importer (TC 3.A.1.2.1) family. In terms of assembly, the complex is composed of an ATP-binding protein (RbsA), two transmembrane proteins (RbsC) and a solute-binding protein (RbsB).

It localises to the cell membrane. It carries out the reaction D-ribose(out) + ATP + H2O = D-ribose(in) + ADP + phosphate + H(+). Part of the ABC transporter complex RbsABC involved in ribose import. Responsible for energy coupling to the transport system. This chain is Ribose import ATP-binding protein RbsA, found in Clostridium perfringens (strain 13 / Type A).